Reading from the N-terminus, the 363-residue chain is Aminopyrrolnitrin oxygenase PrnD (363 aa).

The Rieske domain maps to 29–137; it reads WYVAMRSNEL…TAERYGYVWV (109 aa). Residues C69, H71, C88, and H91 each contribute to the [2Fe-2S] cluster site.

Homodimer. The cofactor is [2Fe-2S] cluster. Requires Fe cation as cofactor. FMN serves as cofactor.

It catalyses the reaction aminopyrrolnitrin + NADPH + 2 O2 + H(+) = pyrrolnitrin + NADP(+) + 2 H2O. Its pathway is antibiotic biosynthesis. In terms of biological role, involved in the biosynthesis of the antifungal antibiotic pyrrolnitrin (PRN). Catalyzes the oxidation of the amino group of aminopyrrolnitrin (APRN) to a nitro group to form PRN. It has high substrate specificity toward physiological substrate aminopyrrolnitrin, p-aminobenzylamine (pABA), p-aminobenzyl alcohol, and p-aminophenyl alanine. In Pseudomonas fluorescens, this protein is Aminopyrrolnitrin oxygenase PrnD (prnD).